A 243-amino-acid chain; its full sequence is Type III pantothenate kinase (243 aa).

Asp-7–Lys-14 serves as a coordination point for ATP. Substrate contacts are provided by residues Tyr-91 and Gly-98–Arg-101. Asp-100 functions as the Proton acceptor in the catalytic mechanism. Thr-122 lines the ATP pocket. Thr-172 contributes to the substrate binding site.

The protein belongs to the type III pantothenate kinase family. In terms of assembly, homodimer. The cofactor is NH4(+). Requires K(+) as cofactor.

It is found in the cytoplasm. It carries out the reaction (R)-pantothenate + ATP = (R)-4'-phosphopantothenate + ADP + H(+). It functions in the pathway cofactor biosynthesis; coenzyme A biosynthesis; CoA from (R)-pantothenate: step 1/5. In terms of biological role, catalyzes the phosphorylation of pantothenate (Pan), the first step in CoA biosynthesis. This Stenotrophomonas maltophilia (strain R551-3) protein is Type III pantothenate kinase.